A 362-amino-acid chain; its full sequence is G-prodeshotein coupled receptor 4 (362 aa).

At 1–8 (MGNHTWEG) the chain is on the extracellular side. N-linked (GlcNAc...) asparagine glycosylation occurs at Asn3. Residues 9–45 (CHVDSRVDHLFPPSLYIFVIGVGLPTNCLALWAAYRQ) traverse the membrane as a helical segment. Cystine bridges form between Cys9–Cys258 and Cys90–Cys168. Over 46–49 (VQQR) the chain is Cytoplasmic. A helical transmembrane segment spans residues 50-80 (NELGVYLMNLSIADLLYICTLPLWVDYFLHH). The Extracellular portion of the chain corresponds to 81-85 (DNWIH). Residues 86-121 (GPGSCKLFGFIFYTNIYISIAFLCCISVDRYLAVAH) traverse the membrane as a helical segment. Topologically, residues 122 to 129 (PLRFARLR) are cytoplasmic. Residues 130 to 156 (RVKTAVAVSSVVWATELGANSAPLFHD) traverse the membrane as a helical segment. Over 157–172 (ELFRDRYNHTFCFEKF) the chain is Extracellular. The extracellular loop 2 (ECL2) stretch occupies residues 157 to 172 (ELFRDRYNHTFCFEKF). A glycan (N-linked (GlcNAc...) asparagine) is linked at Asn164. A helical membrane pass occupies residues 173-210 (PMEGWVAWMNLYRVFVGFLFPWALMLLSYRGILRAVRG). At 211–214 (SVST) the chain is on the cytoplasmic side. Residues 215–250 (ERQEKAKIKRLALSLIAIVLVCFAPYHVLLLSRSAI) traverse the membrane as a helical segment. Residues 251–260 (YLGRPWDCGF) lie on the Extracellular side of the membrane. The chain crosses the membrane as a helical span at residues 261–289 (EERVFSAYHSSLAFTSLNCVADPILYCLV). The Cytoplasmic segment spans residues 290-362 (NEGARSDVAK…VQLKMLPPAQ (73 aa)). The disordered stretch occupies residues 335–362 (AKAMTGSWAATPPSQGDQVQLKMLPPAQ).

This sequence belongs to the G-protein coupled receptor 1 family.

Its subcellular location is the cell membrane. Its activity is regulated as follows. Activated by a network of residues that connects an extracellular-facing cavity to Glu-145, a conserved charged residue buried in the transmembrane core of the receptor. Protonation likely drives conformational changes in extracellular loop 2 (ECL2), which stabilizes movement of transmembrane 3 (TM3) and a series of rearrangements that connect the extracellular-facing cavity to Glu-145, a residue only conserved in proton-sensing G-protein coupled receptors. Functionally, proton-sensing G-protein coupled receptor activated by extracellular pH, which is required to monitor pH changes and generate adaptive reactions. Activated by an optimal pH of 6.8-7.2. Ligand binding causes a conformation change that triggers signaling via guanine nucleotide-binding proteins (G proteins) and modulates the activity of downstream effectors, such as adenylate cyclase. GPR4 is mainly coupled to G(s) G proteins and mediates activation of adenylate cyclase activity. May also couple with G(q) and G(12)/G(13) G proteins. Acts as a key regulator of respiratory sensitivity to CO2/H(+) in brain retrotrapezoid nucleus neurons: acts by mediating detection of protons generated by the formation of carbonic acid in the blood, an important mechanism to impulse to breathe. Also acts as a regulator of acid secretion in the kidney collecting duct by maintaining acid-base homeostasis in the kidney. Acidosis-induced GPR4 activation increases paracellular gap formation and permeability of vascular endothelial cells, possibly through the G(12)/G(13)/Rho GTPase signaling pathway. The protein is G-prodeshotein coupled receptor 4 of Homo sapiens (Human).